A 363-amino-acid polypeptide reads, in one-letter code: Exopolygalacturonase rpg13 (363 aa).

The first 26 residues, 1–26 (MVKFLSLTSSVTALLLLSLGANGVAA), serve as a signal peptide directing secretion. N-linked (GlcNAc...) asparagine glycans are attached at residues Asn121, Asn142, and Asn150. PbH1 repeat units lie at residues 143 to 173 (ATDV…DVSR), 174 to 195 (SSNV…AINE), 197 to 217 (VTNV…SVGS), 227 to 248 (VKTV…RIKT), and 256 to 277 (VSDI…LITT). Asp188 (proton donor) is an active-site residue. Residues Cys190 and Cys207 are joined by a disulfide bond. Residue Asn199 is glycosylated (N-linked (GlcNAc...) asparagine). Residue His211 is part of the active site. A glycan (N-linked (GlcNAc...) asparagine) is linked at Asn321. Cys322 and Cys328 are joined by a disulfide. A PbH1 6 repeat occupies 328–354 (CTDFTLSGVKITKASNTPKNVCVNLDG).

This sequence belongs to the glycosyl hydrolase 28 family. N-glycosylated.

It is found in the secreted. It catalyses the reaction [(1-&gt;4)-alpha-D-galacturonosyl](n) + H2O = alpha-D-galacturonate + [(1-&gt;4)-alpha-D-galacturonosyl](n-1). In terms of biological role, specific in hydrolyzing the terminal glycosidic bond of polygalacturonic acid and oligogalacturonates. Has no activity towards trigalacturonic acid. This is Exopolygalacturonase rpg13 from Rhizopus delemar (strain RA 99-880 / ATCC MYA-4621 / FGSC 9543 / NRRL 43880) (Mucormycosis agent).